Consider the following 997-residue polypeptide: Glutamate [NMDA] receptor subunit 1 (997 aa).

An N-terminal signal peptide occupies residues 1 to 26; the sequence is MAVAEFVFCWPLFELAIVLLVAPIHA. Topologically, residues 27–573 are extracellular; sequence AQRHTASDNP…TLVSFLQPFS (547 aa). Residues Asn-258, Asn-314, Asn-345, Asn-397, Asn-454, Asn-481, and Asn-501 are each glycosylated (N-linked (GlcNAc...) asparagine). Residues 530–532 and Arg-537 each bind glycine; that span reads PLT. Residues 574-594 form a helical membrane-spanning segment; that stretch reads NTLWILVMVSVHVVALVLYLL. The Cytoplasmic segment spans residues 595–651; the sequence is DRFSPFGRFKLSHSDSNEEKALNLSSAVWFAWGVLLNSGIGEGTPRSFSARVLGMVW. Residues 652–672 traverse the membrane as a helical segment; sequence AGFAMIIVASYTANLAAFLVL. Residues 673-831 lie on the Extracellular side of the membrane; that stretch reads ERPKTKLSGI…KTPNTLGLKN (159 aa). The N-linked (GlcNAc...) asparagine glycan is linked to Asn-693. Glycine contacts are provided by Ser-703 and Asp-747. The chain crosses the membrane as a helical span at residues 832–852; it reads MAGVFILVGVGIAGGVGLIII. Residues 853 to 997 are Cytoplasmic-facing; that stretch reads EVIYKKHQVK…YTSDVSHLVV (145 aa). The segment at 947–997 is disordered; the sequence is ELGKPGQSPKVMSANQPGMPMPMLGKTRPQQSVLPPRYSPGYTSDVSHLVV. Over residues 987-997 the composition is skewed to polar residues; that stretch reads GYTSDVSHLVV.

It belongs to the glutamate-gated ion channel (TC 1.A.10.1) family. As to quaternary structure, forms a heteromeric NMDA channel with Nmdar2.

The protein localises to the cell membrane. The protein resides in the postsynaptic cell membrane. Its subcellular location is the postsynaptic density. Functionally, NMDA receptor subtype of glutamate-gated ion channels with high calcium permeability and voltage-dependent sensitivity to magnesium. Mediated by glycine. This protein plays a key role in synaptic plasticity, synaptogenesis, excitotoxicity, memory acquisition and learning. It mediates neuronal functions in glutamate neurotransmission. Is involved in the cell surface targeting of NMDA receptors. Plays a role in associative learning and in long-term memory consolidation. The chain is Glutamate [NMDA] receptor subunit 1 from Drosophila erecta (Fruit fly).